We begin with the raw amino-acid sequence, 369 residues long: UPF0754 membrane protein Aflv_2299 (369 aa).

2 helical membrane-spanning segments follow: residues 1–21 (MGLFLYLLFMIVVGAFIGGMT) and 347–367 (YLGALLGGIIGLIQGCITFFV).

The protein belongs to the UPF0754 family.

It localises to the cell membrane. The protein is UPF0754 membrane protein Aflv_2299 of Anoxybacillus flavithermus (strain DSM 21510 / WK1).